A 56-amino-acid chain; its full sequence is Large ribosomal subunit protein bL32 (56 aa).

The segment at 1 to 40 (MAVQQNKKSRSKRGMRRSHDSLGTAQLSVDATSGELHRRH) is disordered. A compositionally biased stretch (basic residues) spans 7-16 (KKSRSKRGMR). Residues 21–31 (SLGTAQLSVDA) show a composition bias toward polar residues.

It belongs to the bacterial ribosomal protein bL32 family.

This Shewanella halifaxensis (strain HAW-EB4) protein is Large ribosomal subunit protein bL32.